A 104-amino-acid polypeptide reads, in one-letter code: MLITNIETIPGKNIVKHLGLVQGSTVRSKHVGRDIMAGLKNIFGGELRGYTELLEDARGEALERMKRQARGMGANAVINVRFATSSVAQGAAELFVYGTAVVME.

This sequence belongs to the UPF0145 family.

The protein is UPF0145 protein HCH_01985 of Hahella chejuensis (strain KCTC 2396).